A 167-amino-acid chain; its full sequence is CGG triplet repeat-binding protein 1 (167 aa).

Position 56 is a phosphoserine (serine 56). Positions 65-86 are disordered; the sequence is KTHTKRKAEFEEQNVRKKQRPL. A Nuclear localization signal motif is present at residues 80–84; that stretch reads RKKQR. Phosphoserine is present on serine 164.

It is found in the nucleus. Functionally, binds to nonmethylated 5'-d(CGG)(n)-3' trinucleotide repeats in the FMR1 promoter. May play a role in regulating FMR1 promoter. This chain is CGG triplet repeat-binding protein 1 (Cggbp1), found in Mus musculus (Mouse).